Consider the following 118-residue polypeptide: Fluoride-specific ion channel FluC 1 (118 aa).

Transmembrane regions (helical) follow at residues 5–25 (FVLV…ISVL), 34–54 (FPFA…FLVS), 56–76 (ALGP…YTTF), and 98–118 (YLGC…MLGV). Na(+) is bound by residues Gly71 and Thr74.

Belongs to the fluoride channel Fluc/FEX (TC 1.A.43) family.

Its subcellular location is the cell membrane. It catalyses the reaction fluoride(in) = fluoride(out). Its activity is regulated as follows. Na(+) is not transported, but it plays an essential structural role and its presence is essential for fluoride channel function. Fluoride-specific ion channel. Important for reducing fluoride concentration in the cell, thus reducing its toxicity. The polypeptide is Fluoride-specific ion channel FluC 1 (Listeria monocytogenes serotype 4b (strain F2365)).